A 345-amino-acid chain; its full sequence is NADPH dehydrogenase (345 aa).

23-26 (SPMC) contacts FMN. Position 28 (tyrosine 28) interacts with substrate. Alanine 60 and glutamine 102 together coordinate FMN. 164–167 (HGAH) is a substrate binding site. FMN contacts are provided by residues arginine 215 and 307 to 308 (GR).

Belongs to the NADH:flavin oxidoreductase/NADH oxidase family. NamA subfamily. In terms of assembly, homotetramer. The cofactor is FMN.

It catalyses the reaction A + NADPH + H(+) = AH2 + NADP(+). Functionally, catalyzes the reduction of the double bond of an array of alpha,beta-unsaturated aldehydes and ketones. It also reduces the nitro group of nitroester and nitroaromatic compounds. It could have a role in detoxification processes. In Bacillus cereus (strain ATCC 10987 / NRS 248), this protein is NADPH dehydrogenase.